Reading from the N-terminus, the 715-residue chain is Metastasis-associated protein MTA1 (715 aa).

One can recognise a BAH domain in the interval 1–164; sequence MAANMYRVGD…PQQKTLLADK (164 aa). An ELM2 domain is found at 165–276; it reads GEIRVGNRYQ…KAISALVPQG (112 aa). A Glycyl lysine isopeptide (Lys-Gly) (interchain with G-Cter in ubiquitin) cross-link involves residue lysine 182. The SANT domain maps to 283–335; sequence DEMEEWSASEANLFEEALEKYGKDFTDIQQDFLPWKSLTSIIEYYYMWKTTDR. Serine 386 carries the post-translational modification Phosphoserine. A GATA-type; atypical zinc finger spans residues 393–420; it reads CESCYTTQSYQWYSWGPPNMQCRLCASC. The disordered stretch occupies residues 435–460; that stretch reads RLDGERPGPNRSNMSPHGLPARSSGS. 2 positions are modified to phosphoserine: serine 446 and serine 449. A Glycyl lysine isopeptide (Lys-Gly) (interchain with G-Cter in SUMO2 and SUMO3) cross-link involves residue lysine 509. Serine 522 is subject to Phosphoserine. The short motif at 545 to 552 is the SH3-binding element; that stretch reads PRPPKPDP. Lysine 549 participates in a covalent cross-link: Glycyl lysine isopeptide (Lys-Gly) (interchain with G-Cter in SUMO2). Threonine 564 carries the phosphothreonine modification. Serine 576 bears the Phosphoserine mark. Threonine 578 carries the post-translational modification Phosphothreonine. Position 626 is an N6-acetyllysine; alternate (lysine 626). Residue lysine 626 forms a Glycyl lysine isopeptide (Lys-Gly) (interchain with G-Cter in ubiquitin); alternate linkage. Serine 639 carries the post-translational modification Phosphoserine. The interval 656-686 is interaction with RBBP4; it reads DVFYMATEETRKIRKLLSSSETKRAARRPYK. A disordered region spans residues 673–715; the sequence is SSSETKRAARRPYKPIALRQSQALPPRPPPPAPVNDEPIVIED. Positions 696 to 705 match the SH3-binding motif; that stretch reads LPPRPPPPAP. The SUMO interaction motif 1 (SIM); crucial for efficient sumoylation motif lies at 711–715; the sequence is IVIED.

Belongs to the metastasis-associated protein family. As to quaternary structure, component of the nucleosome remodeling and deacetylase (NuRD) repressor complex, composed of core proteins MTA1, MTA2, MTA3, RBBP4, RBBP7, HDAC1, HDAC2, MBD2, MBD3, and peripherally associated proteins CDK2AP1, CDK2AP2, GATAD2A, GATAD2B, CHD3, CHD4 and CHD5. The exact stoichiometry of the NuRD complex is unknown, and some subunits such as MBD2 and MBD3, GATAD2A and GATAD2B, and CHD3, CHD4 and CHD5 define mutually exclusive NuRD complexes. Interacts with RBBP4; the interaction is direct. Interacts with BMAL1. Interacts with CLOCK. Interacts with COP1. Interacts with CSNK1G2 in the cytoplasm. Interacts with EP300. Interacts with HDAC2. Interacts with IFI16. Interacts with ITGB3BP/CENPR. Interacts with MBD3L2. Interacts with MDM2. Interacts with NACC2. Interacts with p53/TP53. Interacts with PIAS1. Interacts with PIAS3. Interacts with PIAS4. Interacts with PWWP2A. Interacts with PWWP2B. Interacts with SENP1. Interacts with SENP2. Interacts with SIX3; facilitates the binding of SIX3 to the core DNA motif of SIX3 promoter. Interacts with SUMO1. Interacts with SUMO2. Interacts with TFCP2L1; which is indispensable for TFCP2L1-mediated self-renewal-promoting effect and endoderm-inhibiting action. Interacts with TFAP2C. Interacts with TPR. Interacts with UBE2I/UBC9. Phosphorylation by CSNK1G2/CK1 triggered by estrogen enhances corepression of estrogen receptor (ER). In terms of processing, acetylation is essential for its transcriptional coactivator activity. Post-translationally, sumoylation positively regulates its transcriptional corepressor activity but does not affect the protein stability. Sumoylated preferentially by SUMO2 or SUMO3 than SUMO1. Sumoylation is enhanced by PIAS1/3/4 and preferentially sumoylated by SUMO2 in the presence of PIAS1/3/4. Desumoylated by SENP1. Ubiquitinated by COP1, which leads to proteasomal degradation. Widely expressed. High expression in brain, liver, kidney, and cardiac muscle, ovaries, adrenal glands and virgin mammary glands. Higher in tumors than in adjacent normal tissue from the same individual. Up-regulated in a wide variety of cancers including breast, liver, ovarian, and colorectal cancer and its expression levels are closely correlated with tumor aggressiveness and metastasis.

It is found in the nucleus. The protein localises to the cytoplasm. It localises to the nucleus envelope. Its subcellular location is the cytoskeleton. Transcriptional coregulator which can act as both a transcriptional corepressor and coactivator. Acts as a component of the histone deacetylase NuRD complex which participates in the remodeling of chromatin. In the NuRD complex, regulates transcription of its targets by modifying the acetylation status of the target chromatin and cofactor accessibility to the target DNA. In conjunction with other components of NuRD, acts as a transcriptional corepressor of BRCA1, ESR1, TFF1 and CDKN1A. Acts as a transcriptional coactivator of BCAS3, and SUMO2, independent of the NuRD complex. Stimulates the expression of WNT1 by inhibiting the expression of its transcriptional corepressor SIX3. Regulates p53-dependent and -independent DNA repair processes following genotoxic stress. Regulates the stability and function of p53/TP53 by inhibiting its ubiquitination by COP1 and MDM2 thereby regulating the p53-dependent DNA repair. Plays a role in the regulation of the circadian clock and is essential for the generation and maintenance of circadian rhythms under constant light and for normal entrainment of behavior to light-dark (LD) cycles. Positively regulates the CLOCK-BMAL1 heterodimer mediated transcriptional activation of its own transcription and the transcription of CRY1. Regulates deacetylation of BMAL1 by regulating SIRT1 expression, resulting in derepressing CRY1-mediated transcription repression. With TFCP2L1, promotes establishment and maintenance of pluripotency in embryonic stem cells (ESCs) and inhibits endoderm differentiation. Functionally, binds to ESR1 and sequesters it in the cytoplasm and enhances its non-genomic responses. This Homo sapiens (Human) protein is Metastasis-associated protein MTA1 (MTA1).